The sequence spans 160 residues: Transcription antitermination protein NusB (160 aa).

The protein belongs to the NusB family.

Involved in transcription antitermination. Required for transcription of ribosomal RNA (rRNA) genes. Binds specifically to the boxA antiterminator sequence of the ribosomal RNA (rrn) operons. The protein is Transcription antitermination protein NusB of Allorhizobium ampelinum (strain ATCC BAA-846 / DSM 112012 / S4) (Agrobacterium vitis (strain S4)).